The chain runs to 500 residues: Raftlin-2 (500 aa).

The N-myristoyl glycine moiety is linked to residue G2. C3 carries the S-palmitoyl cysteine lipid modification. The segment at 203-236 (GHLSESGVEEEPQHESGQHQTERNSSPSYANPKR) is disordered. Positions 213–224 (EPQHESGQHQTE) are enriched in basic and acidic residues. S404 carries the phosphoserine modification. The disordered stretch occupies residues 406-500 (AQTPERKGSR…EEGVTQVTCM (95 aa)). A Phosphothreonine modification is found at T408. Positions 409 to 424 (PERKGSRLLKGEDRNK) are enriched in basic and acidic residues. Positions 426-438 (SSRSLGLDTNASQ) are enriched in polar residues. S429 bears the Phosphoserine mark. Residues 467-478 (SDSFSGFSSSDS) are compositionally biased toward low complexity.

This sequence belongs to the raftlin family. As to expression, expressed in B-cells, heart, brain, spleen, large intestine and lung. Expressed in dendritic cells and macrophages.

The protein resides in the cell membrane. Upon bacterial lipopolysaccharide stimulation, mediates clathrin-dependent internalization of TLR4 in dendritic cells, resulting in activation of TICAM1-mediated signaling and subsequent IFNB1 production. May regulate B-cell antigen receptor-mediated signaling. The polypeptide is Raftlin-2 (Rftn2) (Mus musculus (Mouse)).